The chain runs to 344 residues: Mycothiol acetyltransferase (344 aa).

Glutamate 36 serves as a coordination point for 1D-myo-inositol 2-(L-cysteinylamino)-2-deoxy-alpha-D-glucopyranoside. N-acetyltransferase domains are found at residues 40 to 179 (LALR…TPLP) and 187 to 344 (VTVR…PSTG). The disordered stretch occupies residues 61–83 (ADTSGPNVPDTPGDQNAADTSTM). A compositionally biased stretch (polar residues) spans 73–83 (GDQNAADTSTM). 109–111 (VVV) contacts acetyl-CoA. Residues glutamate 214, lysine 253, and glutamate 272 each coordinate 1D-myo-inositol 2-(L-cysteinylamino)-2-deoxy-alpha-D-glucopyranoside. Residues 276 to 278 (VGV) and 283 to 289 (GGAGLGR) contribute to the acetyl-CoA site. Tyrosine 310 is a binding site for 1D-myo-inositol 2-(L-cysteinylamino)-2-deoxy-alpha-D-glucopyranoside. Acetyl-CoA is bound at residue 315–320 (NVRAVR).

This sequence belongs to the acetyltransferase family. MshD subfamily. In terms of assembly, monomer.

The catalysed reaction is 1D-myo-inositol 2-(L-cysteinylamino)-2-deoxy-alpha-D-glucopyranoside + acetyl-CoA = mycothiol + CoA + H(+). In terms of biological role, catalyzes the transfer of acetyl from acetyl-CoA to desacetylmycothiol (Cys-GlcN-Ins) to form mycothiol. This is Mycothiol acetyltransferase from Frankia casuarinae (strain DSM 45818 / CECT 9043 / HFP020203 / CcI3).